A 355-amino-acid chain; its full sequence is tRNA N6-adenosine threonylcarbamoyltransferase (355 aa).

Residues H113 and H117 each contribute to the Fe cation site. Substrate contacts are provided by residues 135 to 139 (LASGG), D168, G181, and N279. Residue D307 participates in Fe cation binding.

The protein belongs to the KAE1 / TsaD family. The cofactor is Fe(2+).

Its subcellular location is the cytoplasm. The enzyme catalyses L-threonylcarbamoyladenylate + adenosine(37) in tRNA = N(6)-L-threonylcarbamoyladenosine(37) in tRNA + AMP + H(+). Its function is as follows. Required for the formation of a threonylcarbamoyl group on adenosine at position 37 (t(6)A37) in tRNAs that read codons beginning with adenine. Is involved in the transfer of the threonylcarbamoyl moiety of threonylcarbamoyl-AMP (TC-AMP) to the N6 group of A37, together with TsaE and TsaB. TsaD likely plays a direct catalytic role in this reaction. The protein is tRNA N6-adenosine threonylcarbamoyltransferase of Bradyrhizobium sp. (strain BTAi1 / ATCC BAA-1182).